The primary structure comprises 103 residues: Small ribosomal subunit protein uS10 (103 aa).

The protein belongs to the universal ribosomal protein uS10 family. As to quaternary structure, part of the 30S ribosomal subunit.

In terms of biological role, involved in the binding of tRNA to the ribosomes. The protein is Small ribosomal subunit protein uS10 of Shewanella loihica (strain ATCC BAA-1088 / PV-4).